Reading from the N-terminus, the 363-residue chain is Exopolygalacturonase rpg13 (363 aa).

Positions 1 to 26 (MVKFLSLTSSVTALLLLSLGANGVAA) are cleaved as a signal peptide. N-linked (GlcNAc...) asparagine glycosylation is found at Asn-121, Asn-142, and Asn-150. PbH1 repeat units lie at residues 143-173 (ATDV…DVSR), 174-195 (SSNV…AINE), 197-217 (VTNV…SVGS), 227-248 (VKTV…RIKT), and 256-277 (VSDI…LITT). Asp-188 acts as the Proton donor in catalysis. Residues Cys-190 and Cys-207 are joined by a disulfide bond. Asn-199 carries N-linked (GlcNAc...) asparagine glycosylation. The active site involves His-211. Asn-321 is a glycosylation site (N-linked (GlcNAc...) asparagine). Cys-322 and Cys-328 are oxidised to a cystine. The PbH1 6 repeat unit spans residues 328-354 (CTDFTLSGVKITKASNTPKNVCVNLDG).

Belongs to the glycosyl hydrolase 28 family. Post-translationally, N-glycosylated.

It is found in the secreted. The catalysed reaction is [(1-&gt;4)-alpha-D-galacturonosyl](n) + H2O = alpha-D-galacturonate + [(1-&gt;4)-alpha-D-galacturonosyl](n-1). Its function is as follows. Specific in hydrolyzing the terminal glycosidic bond of polygalacturonic acid and oligogalacturonates. Has no activity towards trigalacturonic acid. This Rhizopus delemar (strain RA 99-880 / ATCC MYA-4621 / FGSC 9543 / NRRL 43880) (Mucormycosis agent) protein is Exopolygalacturonase rpg13.